The chain runs to 130 residues: Small ribosomal subunit protein uS8 (130 aa).

It belongs to the universal ribosomal protein uS8 family. In terms of assembly, part of the 30S ribosomal subunit. Contacts proteins S5 and S12.

One of the primary rRNA binding proteins, it binds directly to 16S rRNA central domain where it helps coordinate assembly of the platform of the 30S subunit. The chain is Small ribosomal subunit protein uS8 from Buchnera aphidicola subsp. Acyrthosiphon kondoi (Acyrthosiphon kondoi symbiotic bacterium).